The following is a 301-amino-acid chain: D-alanine--D-alanine ligase A (301 aa).

The region spanning 96–290 (KKILRYEGVE…YSKLLDMIIE (195 aa)) is the ATP-grasp domain. 123–178 (LDKLGFPLVVKPNSGGSSVGVKIVYNKNELISMLETVFEWDSEVVIEKYIKGDEIT) serves as a coordination point for ATP. Residues Asp245, Glu257, and Asn259 each coordinate Mg(2+).

Belongs to the D-alanine--D-alanine ligase family. Requires Mg(2+) as cofactor. The cofactor is Mn(2+).

It is found in the cytoplasm. It carries out the reaction 2 D-alanine + ATP = D-alanyl-D-alanine + ADP + phosphate + H(+). It participates in cell wall biogenesis; peptidoglycan biosynthesis. In terms of biological role, cell wall formation. In Bacillus cereus (strain ATCC 14579 / DSM 31 / CCUG 7414 / JCM 2152 / NBRC 15305 / NCIMB 9373 / NCTC 2599 / NRRL B-3711), this protein is D-alanine--D-alanine ligase A.